A 161-amino-acid polypeptide reads, in one-letter code: Small ribosomal subunit protein uS9 (161 aa).

The protein belongs to the universal ribosomal protein uS9 family.

The protein is Small ribosomal subunit protein uS9 of Rickettsia typhi (strain ATCC VR-144 / Wilmington).